Reading from the N-terminus, the 319-residue chain is 4-hydroxy-3-methylbut-2-enyl diphosphate reductase (319 aa).

Cysteine 15 is a [4Fe-4S] cluster binding site. (2E)-4-hydroxy-3-methylbut-2-enyl diphosphate contacts are provided by histidine 44 and histidine 77. The dimethylallyl diphosphate site is built by histidine 44 and histidine 77. Positions 44 and 77 each coordinate isopentenyl diphosphate. [4Fe-4S] cluster is bound at residue cysteine 99. Position 127 (histidine 127) interacts with (2E)-4-hydroxy-3-methylbut-2-enyl diphosphate. Histidine 127 serves as a coordination point for dimethylallyl diphosphate. An isopentenyl diphosphate-binding site is contributed by histidine 127. The active-site Proton donor is glutamate 129. Threonine 167 serves as a coordination point for (2E)-4-hydroxy-3-methylbut-2-enyl diphosphate. Cysteine 197 contributes to the [4Fe-4S] cluster binding site. The (2E)-4-hydroxy-3-methylbut-2-enyl diphosphate site is built by serine 225, serine 226, asparagine 227, and serine 269. Dimethylallyl diphosphate-binding residues include serine 225, serine 226, asparagine 227, and serine 269. Positions 225, 226, 227, and 269 each coordinate isopentenyl diphosphate.

The protein belongs to the IspH family. The cofactor is [4Fe-4S] cluster.

The enzyme catalyses isopentenyl diphosphate + 2 oxidized [2Fe-2S]-[ferredoxin] + H2O = (2E)-4-hydroxy-3-methylbut-2-enyl diphosphate + 2 reduced [2Fe-2S]-[ferredoxin] + 2 H(+). It carries out the reaction dimethylallyl diphosphate + 2 oxidized [2Fe-2S]-[ferredoxin] + H2O = (2E)-4-hydroxy-3-methylbut-2-enyl diphosphate + 2 reduced [2Fe-2S]-[ferredoxin] + 2 H(+). It participates in isoprenoid biosynthesis; dimethylallyl diphosphate biosynthesis; dimethylallyl diphosphate from (2E)-4-hydroxy-3-methylbutenyl diphosphate: step 1/1. The protein operates within isoprenoid biosynthesis; isopentenyl diphosphate biosynthesis via DXP pathway; isopentenyl diphosphate from 1-deoxy-D-xylulose 5-phosphate: step 6/6. In terms of biological role, catalyzes the conversion of 1-hydroxy-2-methyl-2-(E)-butenyl 4-diphosphate (HMBPP) into a mixture of isopentenyl diphosphate (IPP) and dimethylallyl diphosphate (DMAPP). Acts in the terminal step of the DOXP/MEP pathway for isoprenoid precursor biosynthesis. This is 4-hydroxy-3-methylbut-2-enyl diphosphate reductase from Rhodopirellula baltica (strain DSM 10527 / NCIMB 13988 / SH1).